A 170-amino-acid chain; its full sequence is Crossover junction endodeoxyribonuclease RuvC (170 aa).

Catalysis depends on residues aspartate 8, glutamate 67, and aspartate 139. Aspartate 8, glutamate 67, and aspartate 139 together coordinate Mg(2+).

This sequence belongs to the RuvC family. Homodimer which binds Holliday junction (HJ) DNA. The HJ becomes 2-fold symmetrical on binding to RuvC with unstacked arms; it has a different conformation from HJ DNA in complex with RuvA. In the full resolvosome a probable DNA-RuvA(4)-RuvB(12)-RuvC(2) complex forms which resolves the HJ. It depends on Mg(2+) as a cofactor.

It localises to the cytoplasm. It catalyses the reaction Endonucleolytic cleavage at a junction such as a reciprocal single-stranded crossover between two homologous DNA duplexes (Holliday junction).. In terms of biological role, the RuvA-RuvB-RuvC complex processes Holliday junction (HJ) DNA during genetic recombination and DNA repair. Endonuclease that resolves HJ intermediates. Cleaves cruciform DNA by making single-stranded nicks across the HJ at symmetrical positions within the homologous arms, yielding a 5'-phosphate and a 3'-hydroxyl group; requires a central core of homology in the junction. The consensus cleavage sequence is 5'-(A/T)TT(C/G)-3'. Cleavage occurs on the 3'-side of the TT dinucleotide at the point of strand exchange. HJ branch migration catalyzed by RuvA-RuvB allows RuvC to scan DNA until it finds its consensus sequence, where it cleaves and resolves the cruciform DNA. This is Crossover junction endodeoxyribonuclease RuvC from Pectobacterium atrosepticum (strain SCRI 1043 / ATCC BAA-672) (Erwinia carotovora subsp. atroseptica).